A 283-amino-acid polypeptide reads, in one-letter code: uncharacterized protein (283 aa).

The Proton donor role is filled by Tyr55.

Belongs to the aldo/keto reductase family.

It is found in the cytoplasm. Its subcellular location is the nucleus. This is an uncharacterized protein from Schizosaccharomyces pombe (strain 972 / ATCC 24843) (Fission yeast).